Consider the following 313-residue polypeptide: Olfactory receptor 10K1 (313 aa).

The Extracellular portion of the chain corresponds to 1 to 25; the sequence is MEQVNKTVVREFVVLGFSSLARLQQ. The N-linked (GlcNAc...) asparagine glycan is linked to asparagine 5. A helical membrane pass occupies residues 26-46; that stretch reads LLFVIFLLLYLFTLGTNAIII. Over 47-54 the chain is Cytoplasmic; the sequence is STIVLDRA. A helical membrane pass occupies residues 55–75; that stretch reads LHTPMYFFLAILSCSEICYTF. Residues 76–99 lie on the Extracellular side of the membrane; that stretch reads VIVPKMLVDLLSQKKTISFLGCAI. Residues 100-120 form a helical membrane-spanning segment; that stretch reads QMFSFLFFGSSHSFLLAAMGY. At 121 to 139 the chain is on the cytoplasmic side; it reads DRYMAICNPLRYSVLMGHG. The chain crosses the membrane as a helical span at residues 140–160; sequence VCMGLMAAACACGFTVSLVTT. Topologically, residues 161 to 197 are extracellular; sequence SLVFHLPFHSSNQLHHFFCDISPVLKLASQHSGFSQL. The helical transmembrane segment at 198–217 threads the bilayer; sequence VIFMLGVFALVIPLLLILVS. At 218–237 the chain is on the cytoplasmic side; it reads YIRIISAILKIPSSVGRYKT. The helical transmembrane segment at 238-258 threads the bilayer; sequence FSTCASHLIVVTVHYSCASFI. Topologically, residues 259–271 are extracellular; the sequence is YLRPKTNYTSSQD. A glycan (N-linked (GlcNAc...) asparagine) is linked at asparagine 265. A helical transmembrane segment spans residues 272–292; sequence TLISVSYTILTPLFNPMIYSL. At 293 to 313 the chain is on the cytoplasmic side; it reads RNKEFKSALRRTIGQTFYPLS.

The protein belongs to the G-protein coupled receptor 1 family.

Its subcellular location is the cell membrane. Odorant receptor. The polypeptide is Olfactory receptor 10K1 (OR10K1) (Homo sapiens (Human)).